Consider the following 571-residue polypeptide: Calcium-dependent protein kinase 16 (571 aa).

The tract at residues 1–74 (MGLCFSSAAK…TRHTPPHGKV (74 aa)) is disordered. Gly-2 carries the N-myristoyl glycine lipid modification. Cys-4 carries the S-palmitoyl cysteine lipid modification. Over residues 63–72 (TPTRHTPPHG) the composition is skewed to basic residues. Positions 108–368 (YTIGKLLGHG…AAQALSHPWV (261 aa)) constitute a Protein kinase domain. Residues 114–122 (LGHGQFGYT) and Lys-137 each bind ATP. Asp-234 serves as the catalytic Proton acceptor. Phosphoserine is present on Ser-274. An autoinhibitory domain region spans residues 374–404 (ASEIPIDISVLNNMRQFVKFSRLKQFALRAL). 4 consecutive EF-hand domains span residues 411 to 446 (EELADLRDQFDAIDVDKNGVISLEEMRQALAKDHPW), 448 to 483 (LKDARVAEILQAIDSNTDGFVDFGEFVAAALHVNQL), 490 to 525 (KWQQRSRAAFEKFDIDGDGFITAEELRMHTGLKGSI), and 528 to 555 (LLEEADIDNDGKISLQEFRRLLRTASIK). Residues Asp-424, Asp-426, Asn-428, Glu-435, Asp-461, Asn-463, Asp-465, Glu-472, Asp-503, Asp-505, Asp-507, Glu-514, Asp-533, Asp-535, Asp-537, and Lys-539 each contribute to the Ca(2+) site. At Ser-541 the chain carries Phosphoserine. Glu-544 is a Ca(2+) binding site.

It belongs to the protein kinase superfamily. Ser/Thr protein kinase family. CDPK subfamily.

The protein resides in the cell membrane. It localises to the nucleus. It catalyses the reaction L-seryl-[protein] + ATP = O-phospho-L-seryl-[protein] + ADP + H(+). The enzyme catalyses L-threonyl-[protein] + ATP = O-phospho-L-threonyl-[protein] + ADP + H(+). Its activity is regulated as follows. Activated by calcium. Autophosphorylation may play an important role in the regulation of the kinase activity. Its function is as follows. May play a role in signal transduction pathways that involve calcium as a second messenger. This Arabidopsis thaliana (Mouse-ear cress) protein is Calcium-dependent protein kinase 16 (CPK16).